Consider the following 381-residue polypeptide: MSDDKKSDDYRVDMPSSRTSRAPSPIMRPALKSAPSLTENPMAAVLAYCASSILMTVTNKYVLSGVDFNLNFFLLCVQSVVCVTAISICKAAGLITYRDFNTDEAKKWFPISLLLIGMIYTGTWALKYLSIPVYTIFKNLTIILIAYGEVLWFGGSVTPMTLFSFGLMVLSSIIAAWADIQHALNSFGQQSEAANEALSTMHAGYLWMAFNCVCSATYLLSMRKRIKLTNFKDYDTMYYNNLLTIPILLVASILVEDWSSANIQKNFPPEQRNTVIMVMVISGMSTVFISYTSAWAVRVTSSTTYSMVGALNKLPIAISGLVFFDAPVTFGSVSAIFVGFVSGIVYAVAKVRQNSKPKTVLPTTNIPLSASSRSMQDSLKA.

Residues 1–12 show a composition bias toward basic and acidic residues; that stretch reads MSDDKKSDDYRV. The tract at residues 1 to 28 is disordered; sequence MSDDKKSDDYRVDMPSSRTSRAPSPIMR. Residues 1-36 are Cytoplasmic-facing; that stretch reads MSDDKKSDDYRVDMPSSRTSRAPSPIMRPALKSAPS. Residues 37–57 form a helical membrane-spanning segment; it reads LTENPMAAVLAYCASSILMTV. Over 58 to 67 the chain is Lumenal; the sequence is TNKYVLSGVD. A helical transmembrane segment spans residues 68–88; sequence FNLNFFLLCVQSVVCVTAISI. The Cytoplasmic segment spans residues 89–107; sequence CKAAGLITYRDFNTDEAKK. Residues 108-126 form a helical membrane-spanning segment; the sequence is WFPISLLLIGMIYTGTWAL. Topologically, residues 127–130 are lumenal; sequence KYLS. The helical transmembrane segment at 131–153 threads the bilayer; sequence IPVYTIFKNLTIILIAYGEVLWF. The Cytoplasmic portion of the chain corresponds to 154 to 161; the sequence is GGSVTPMT. The helical transmembrane segment at 162–184 threads the bilayer; that stretch reads LFSFGLMVLSSIIAAWADIQHAL. Residues 185-199 lie on the Lumenal side of the membrane; the sequence is NSFGQQSEAANEALS. The helical transmembrane segment at 200–220 threads the bilayer; the sequence is TMHAGYLWMAFNCVCSATYLL. Over 221–242 the chain is Cytoplasmic; the sequence is SMRKRIKLTNFKDYDTMYYNNL. The helical transmembrane segment at 243–263 threads the bilayer; the sequence is LTIPILLVASILVEDWSSANI. Residues 264-274 lie on the Lumenal side of the membrane; the sequence is QKNFPPEQRNT. Residues 275 to 295 form a helical membrane-spanning segment; the sequence is VIMVMVISGMSTVFISYTSAW. Residues 296-303 lie on the Cytoplasmic side of the membrane; it reads AVRVTSST. The helical transmembrane segment at 304–324 threads the bilayer; sequence TYSMVGALNKLPIAISGLVFF. Over 325-327 the chain is Lumenal; sequence DAP. Residues 328–348 form a helical membrane-spanning segment; it reads VTFGSVSAIFVGFVSGIVYAV. At 349–381 the chain is on the cytoplasmic side; the sequence is AKVRQNSKPKTVLPTTNIPLSASSRSMQDSLKA.

It belongs to the TPT transporter family. SLC35D subfamily. In terms of assembly, homooligomer.

The protein resides in the golgi apparatus membrane. It localises to the cytoplasmic vesicle membrane. Its subcellular location is the endoplasmic reticulum membrane. Involved in the import of GDP-mannose from the cytoplasm into the Golgi lumen. This is GDP-mannose transporter (VRG4) from Phaeosphaeria nodorum (strain SN15 / ATCC MYA-4574 / FGSC 10173) (Glume blotch fungus).